The chain runs to 284 residues: 4-diphosphocytidyl-2-C-methyl-D-erythritol kinase (284 aa).

Residue Lys-14 is part of the active site. 97-107 (PMGGGLGGGSS) lines the ATP pocket. The active site involves Asp-139.

Belongs to the GHMP kinase family. IspE subfamily.

It catalyses the reaction 4-CDP-2-C-methyl-D-erythritol + ATP = 4-CDP-2-C-methyl-D-erythritol 2-phosphate + ADP + H(+). It participates in isoprenoid biosynthesis; isopentenyl diphosphate biosynthesis via DXP pathway; isopentenyl diphosphate from 1-deoxy-D-xylulose 5-phosphate: step 3/6. Functionally, catalyzes the phosphorylation of the position 2 hydroxy group of 4-diphosphocytidyl-2C-methyl-D-erythritol. This chain is 4-diphosphocytidyl-2-C-methyl-D-erythritol kinase, found in Psychromonas ingrahamii (strain DSM 17664 / CCUG 51855 / 37).